A 275-amino-acid polypeptide reads, in one-letter code: Ciliary microtubule inner protein 2B (275 aa).

Disordered stretches follow at residues 62–84 (PPIRPPRSPEVPRESLPVRRGQE) and 125–169 (EKQG…SPYS). Composition is skewed to basic and acidic residues over residues 71–84 (EVPRESLPVRRGQE) and 125–147 (EKQGSEELPKEAKGRKDTEKDQV).

The protein belongs to the CIMIP2 family. In terms of assembly, microtubule inner protein component of sperm flagellar doublet microtubules. In terms of tissue distribution, expressed in airway epithelial cells.

The protein localises to the cytoplasm. It localises to the cytoskeleton. Its subcellular location is the cilium axoneme. The protein resides in the flagellum axoneme. Its function is as follows. Microtubule inner protein (MIP) part of the dynein-decorated doublet microtubules (DMTs) in cilia axoneme, which is required for motile cilia beating. The chain is Ciliary microtubule inner protein 2B from Homo sapiens (Human).